The primary structure comprises 1001 residues: Phosphoenolpyruvate carboxylase (1001 aa).

Active-site residues include H189 and K642.

Belongs to the PEPCase type 1 family. The cofactor is Mg(2+).

The catalysed reaction is oxaloacetate + phosphate = phosphoenolpyruvate + hydrogencarbonate. Forms oxaloacetate, a four-carbon dicarboxylic acid source for the tricarboxylic acid cycle. In Prochlorococcus marinus (strain SARG / CCMP1375 / SS120), this protein is Phosphoenolpyruvate carboxylase.